The following is a 205-amino-acid chain: Thiamine-phosphate synthase (205 aa).

4-amino-2-methyl-5-(diphosphooxymethyl)pyrimidine contacts are provided by residues 37–41 and Asn-69; that span reads QVREK. Asp-70 and Asp-89 together coordinate Mg(2+). Ser-108 serves as a coordination point for 4-amino-2-methyl-5-(diphosphooxymethyl)pyrimidine. 134–136 contacts 2-[(2R,5Z)-2-carboxy-4-methylthiazol-5(2H)-ylidene]ethyl phosphate; that stretch reads TGS. Lys-137 is a binding site for 4-amino-2-methyl-5-(diphosphooxymethyl)pyrimidine. Residues Gly-165 and 185–186 each bind 2-[(2R,5Z)-2-carboxy-4-methylthiazol-5(2H)-ylidene]ethyl phosphate; that span reads IS.

It belongs to the thiamine-phosphate synthase family. The cofactor is Mg(2+).

The catalysed reaction is 2-[(2R,5Z)-2-carboxy-4-methylthiazol-5(2H)-ylidene]ethyl phosphate + 4-amino-2-methyl-5-(diphosphooxymethyl)pyrimidine + 2 H(+) = thiamine phosphate + CO2 + diphosphate. The enzyme catalyses 2-(2-carboxy-4-methylthiazol-5-yl)ethyl phosphate + 4-amino-2-methyl-5-(diphosphooxymethyl)pyrimidine + 2 H(+) = thiamine phosphate + CO2 + diphosphate. It carries out the reaction 4-methyl-5-(2-phosphooxyethyl)-thiazole + 4-amino-2-methyl-5-(diphosphooxymethyl)pyrimidine + H(+) = thiamine phosphate + diphosphate. It functions in the pathway cofactor biosynthesis; thiamine diphosphate biosynthesis; thiamine phosphate from 4-amino-2-methyl-5-diphosphomethylpyrimidine and 4-methyl-5-(2-phosphoethyl)-thiazole: step 1/1. Functionally, condenses 4-methyl-5-(beta-hydroxyethyl)thiazole monophosphate (THZ-P) and 2-methyl-4-amino-5-hydroxymethyl pyrimidine pyrophosphate (HMP-PP) to form thiamine monophosphate (TMP). This is Thiamine-phosphate synthase from Clostridium botulinum (strain Kyoto / Type A2).